Reading from the N-terminus, the 225-residue chain is UPF0758 protein BP1235 (225 aa).

The MPN domain occupies 103–225; it reads ALANPDLVRR…TVSMAAQGHL (123 aa). The Zn(2+) site is built by His174, His176, and Asp187. The JAMM motif motif lies at 174-187; sequence HNHPGGTAAASAAD.

This sequence belongs to the UPF0758 family.

In Bordetella pertussis (strain Tohama I / ATCC BAA-589 / NCTC 13251), this protein is UPF0758 protein BP1235.